The sequence spans 137 residues: Large ribosomal subunit protein uL16c (137 aa).

It belongs to the universal ribosomal protein uL16 family. In terms of assembly, part of the 50S ribosomal subunit.

It is found in the plastid. The protein localises to the chloroplast. This chain is Large ribosomal subunit protein uL16c, found in Trieres chinensis (Marine centric diatom).